We begin with the raw amino-acid sequence, 603 residues long: Sabinene hydrate synthase, chloroplastic (603 aa).

The N-terminal 47 residues, M1–R47, are a transit peptide targeting the chloroplast. 2 residues coordinate Mn(2+): D357 and D361. The DDXXD motif motif lies at D357–D361. Homodimerization stretches follow at residues Y363–L369 and E435–P472. Residues D501 and E509 each coordinate Mn(2+).

This sequence belongs to the terpene synthase family. Homodimer. It depends on Mn(2+) as a cofactor. The cofactor is Mg(2+).

Its subcellular location is the plastid. It localises to the chloroplast. It catalyses the reaction (2E)-geranyl diphosphate + H2O = sabinene hydrate + diphosphate. The protein operates within secondary metabolite biosynthesis; terpenoid biosynthesis. Involved in the biosynthesis of phenolic monoterpenes natural products. Monoterpene synthase which catalyzes the conversion of geranyl diphosphate (GPP) to sabinene hydrate, mainly (Z)-sabinene hydrate and to a lower extent (E)-sabinene hydrate, and the formation of minor amounts and traces of several other monoterpenes (e.g. mainly alpha-thujene, alpha-pinene and myrcene). The protein is Sabinene hydrate synthase, chloroplastic of Thymus vulgaris (Thyme).